The following is a 698-amino-acid chain: Pheromone-regulated protein PRM7 (698 aa).

Disordered regions lie at residues 1-65 (MYRT…IGNS), 133-183 (ESTT…SAVT), 197-274 (SVDQ…TVTI), and 455-480 (SASSSRSSATSIIKPNMPVSSNDSKT). Low complexity-rich tracts occupy residues 9 to 56 (EVTT…TTSA) and 158 to 183 (VTTSTDPTSSSDVATSADPTSSSAVT). Low complexity predominate over residues 455-465 (SASSSRSSATS).

This chain is Pheromone-regulated protein PRM7 (PRM7), found in Saccharomyces cerevisiae (strain ATCC 204508 / S288c) (Baker's yeast).